The sequence spans 611 residues: Protein Spindly-A (611 aa).

A coiled-coil region spans residues 1 to 390 (MEESETVLKL…KENEKIKDEL (390 aa)). The segment at 487 to 611 (TCTAESTDGR…PNATTQCPQQ (125 aa)) is disordered. Residues 493 to 511 (TDGRIHSKEDLSLSTKEQD) show a composition bias toward basic and acidic residues. Over residues 552–567 (HNCSVTSASPRSTSED) the composition is skewed to polar residues. Over residues 570–583 (SESKRFDEEQEKRK) the composition is skewed to basic and acidic residues. The span at 602 to 611 (PNATTQCPQQ) shows a compositional bias: polar residues.

The protein belongs to the Spindly family.

The protein localises to the chromosome. The protein resides in the centromere. Its subcellular location is the kinetochore. Its function is as follows. Required for the localization of dynein and dynactin to the mitotic kintochore. Dynein is believed to control the initial lateral interaction between the kinetochore and spindle microtubules and to facilitate the subsequent formation of end-on kinetochore-microtubule attachments mediated by the NDC80 complex. This Xenopus laevis (African clawed frog) protein is Protein Spindly-A (spdl1-a).